Consider the following 738-residue polypeptide: Phosphoribosylformylglycinamidine synthase subunit PurL (738 aa).

H53 is a catalytic residue. ATP is bound by residues Y56 and K95. E97 contributes to the Mg(2+) binding site. Residues 98–101 (SHNH) and R120 contribute to the substrate site. H99 functions as the Proton acceptor in the catalytic mechanism. A Mg(2+)-binding site is contributed by D121. Q244 provides a ligand contact to substrate. D274 is a binding site for Mg(2+). 318–320 (ESQ) provides a ligand contact to substrate. Residues D499 and G536 each coordinate ATP. N537 is a binding site for Mg(2+). Position 539 (S539) interacts with substrate.

The protein belongs to the FGAMS family. Monomer. Part of the FGAM synthase complex composed of 1 PurL, 1 PurQ and 2 PurS subunits.

It localises to the cytoplasm. It carries out the reaction N(2)-formyl-N(1)-(5-phospho-beta-D-ribosyl)glycinamide + L-glutamine + ATP + H2O = 2-formamido-N(1)-(5-O-phospho-beta-D-ribosyl)acetamidine + L-glutamate + ADP + phosphate + H(+). It functions in the pathway purine metabolism; IMP biosynthesis via de novo pathway; 5-amino-1-(5-phospho-D-ribosyl)imidazole from N(2)-formyl-N(1)-(5-phospho-D-ribosyl)glycinamide: step 1/2. Functionally, part of the phosphoribosylformylglycinamidine synthase complex involved in the purines biosynthetic pathway. Catalyzes the ATP-dependent conversion of formylglycinamide ribonucleotide (FGAR) and glutamine to yield formylglycinamidine ribonucleotide (FGAM) and glutamate. The FGAM synthase complex is composed of three subunits. PurQ produces an ammonia molecule by converting glutamine to glutamate. PurL transfers the ammonia molecule to FGAR to form FGAM in an ATP-dependent manner. PurS interacts with PurQ and PurL and is thought to assist in the transfer of the ammonia molecule from PurQ to PurL. The protein is Phosphoribosylformylglycinamidine synthase subunit PurL of Leuconostoc mesenteroides subsp. mesenteroides (strain ATCC 8293 / DSM 20343 / BCRC 11652 / CCM 1803 / JCM 6124 / NCDO 523 / NBRC 100496 / NCIMB 8023 / NCTC 12954 / NRRL B-1118 / 37Y).